Consider the following 407-residue polypeptide: Probable tRNA sulfurtransferase (407 aa).

In terms of domain architecture, THUMP spans 61–165 (NEITNRLSKI…LDAIYMYEEV (105 aa)). ATP contacts are provided by residues 183-184 (ML), 208-209 (HF), Arg265, Gly287, and Gln296.

Belongs to the ThiI family.

It localises to the cytoplasm. The catalysed reaction is [ThiI sulfur-carrier protein]-S-sulfanyl-L-cysteine + a uridine in tRNA + 2 reduced [2Fe-2S]-[ferredoxin] + ATP + H(+) = [ThiI sulfur-carrier protein]-L-cysteine + a 4-thiouridine in tRNA + 2 oxidized [2Fe-2S]-[ferredoxin] + AMP + diphosphate. The enzyme catalyses [ThiS sulfur-carrier protein]-C-terminal Gly-Gly-AMP + S-sulfanyl-L-cysteinyl-[cysteine desulfurase] + AH2 = [ThiS sulfur-carrier protein]-C-terminal-Gly-aminoethanethioate + L-cysteinyl-[cysteine desulfurase] + A + AMP + 2 H(+). Its pathway is cofactor biosynthesis; thiamine diphosphate biosynthesis. In terms of biological role, catalyzes the ATP-dependent transfer of a sulfur to tRNA to produce 4-thiouridine in position 8 of tRNAs, which functions as a near-UV photosensor. Also catalyzes the transfer of sulfur to the sulfur carrier protein ThiS, forming ThiS-thiocarboxylate. This is a step in the synthesis of thiazole, in the thiamine biosynthesis pathway. The sulfur is donated as persulfide by IscS. The sequence is that of Probable tRNA sulfurtransferase from Staphylococcus aureus (strain MRSA252).